The primary structure comprises 963 residues: Pyruvate, phosphate dikinase 1, chloroplastic (963 aa).

The N-terminal 76 residues, 1–76, are a transit peptide targeting the chloroplast; it reads MLYIRKKMTS…GLHRETKARA (76 aa). Thr-543 bears the Phosphothreonine; by PDRP1 mark. His-545 acts as the Tele-phosphohistidine intermediate in catalysis. Positions 651, 707, 836, 857, 858, 859, and 860 each coordinate substrate. Glu-836 lines the Mg(2+) pocket. Asp-860 lines the Mg(2+) pocket. Residue Cys-922 is the Proton donor of the active site.

The protein belongs to the PEP-utilizing enzyme family. In terms of assembly, homotetramer. Interacts with RP1 and RP2. It depends on Mg(2+) as a cofactor. Phosphorylation of Thr-543 in the dark inactivates the enzyme. Dephosphorylation upon light stimulation reactivates the enzyme. As to expression, isoform 1 is expressed in leaves, flowers and siliques. Isoform 2 is found in cotyledons, rosette and cauline leaves, petioles, flowers and siliques.

The protein resides in the plastid. Its subcellular location is the chloroplast. The protein localises to the cytoplasm. It carries out the reaction pyruvate + phosphate + ATP = phosphoenolpyruvate + AMP + diphosphate + H(+). With respect to regulation, activated by light-induced dephosphorylation. Inhibited by dark-induced phosphorylation. Both reactions are catalyzed by PDRP1. In terms of biological role, formation of phosphoenolpyruvate. May be involved in regulating the flux of carbon into starch and fatty acids of seeds and in the remobilization of nitrogen reserves in senescing leaves. This Arabidopsis thaliana (Mouse-ear cress) protein is Pyruvate, phosphate dikinase 1, chloroplastic (PPDK).